The sequence spans 279 residues: Probable cyclic nucleotide phosphodiesterase Psyc_2036 (279 aa).

Fe cation is bound by residues Asp23, His25, Asp70, Asn100, His179, His218, and His220. AMP-binding positions include His25, Asp70, and 100–101 (NH). His220 serves as a coordination point for AMP.

The protein belongs to the cyclic nucleotide phosphodiesterase class-III family. Fe(2+) is required as a cofactor.

This is Probable cyclic nucleotide phosphodiesterase Psyc_2036 from Psychrobacter arcticus (strain DSM 17307 / VKM B-2377 / 273-4).